The following is a 419-amino-acid chain: 3-oxo-isoapionate-4-phosphate decarboxylase (419 aa).

Mg(2+) is bound by residues K179, D181, and E182. N6-carboxylysine is present on K179.

It belongs to the RuBisCO large chain family. Mg(2+) is required as a cofactor.

It carries out the reaction 3-oxoisoapionate 4-phosphate + H(+) = L-erythrulose 1-phosphate + CO2. Its pathway is carbohydrate metabolism. Functionally, involved in catabolism of D-apiose. Catalyzes the decarboxylation of 3-oxo-isoapionate 4-phosphate to L-erythrulose 1-phosphate. This is 3-oxo-isoapionate-4-phosphate decarboxylase from Rhizobium rhizogenes (strain K84 / ATCC BAA-868) (Agrobacterium radiobacter).